The chain runs to 40 residues: Photosystem II reaction center protein J (40 aa).

Residues 8 to 28 (IPLWIIGTVAGIVVIGLIGLF) traverse the membrane as a helical segment.

It belongs to the PsbJ family. PSII is composed of 1 copy each of membrane proteins PsbA, PsbB, PsbC, PsbD, PsbE, PsbF, PsbH, PsbI, PsbJ, PsbK, PsbL, PsbM, PsbT, PsbX, PsbY, PsbZ, Psb30/Ycf12, at least 3 peripheral proteins of the oxygen-evolving complex and a large number of cofactors. It forms dimeric complexes.

It is found in the plastid. It localises to the chloroplast thylakoid membrane. In terms of biological role, one of the components of the core complex of photosystem II (PSII). PSII is a light-driven water:plastoquinone oxidoreductase that uses light energy to abstract electrons from H(2)O, generating O(2) and a proton gradient subsequently used for ATP formation. It consists of a core antenna complex that captures photons, and an electron transfer chain that converts photonic excitation into a charge separation. The chain is Photosystem II reaction center protein J from Pisum sativum (Garden pea).